A 128-amino-acid chain; its full sequence is Large ribosomal subunit protein bL17 (128 aa).

Belongs to the bacterial ribosomal protein bL17 family. In terms of assembly, part of the 50S ribosomal subunit. Contacts protein L32.

The sequence is that of Large ribosomal subunit protein bL17 from Streptococcus pneumoniae serotype 4 (strain ATCC BAA-334 / TIGR4).